The following is a 164-amino-acid chain: Phosphopantetheine adenylyltransferase (164 aa).

Thr-10 contacts substrate. ATP-binding positions include Thr-10 to Phe-11 and His-18. Substrate is bound by residues Lys-42, Leu-74, and Arg-88. Residues Gly-89 to Arg-91, Glu-99, and Asn-124 to Thr-130 each bind ATP.

Belongs to the bacterial CoaD family. Homohexamer. Mg(2+) is required as a cofactor.

Its subcellular location is the cytoplasm. It carries out the reaction (R)-4'-phosphopantetheine + ATP + H(+) = 3'-dephospho-CoA + diphosphate. It participates in cofactor biosynthesis; coenzyme A biosynthesis; CoA from (R)-pantothenate: step 4/5. In terms of biological role, reversibly transfers an adenylyl group from ATP to 4'-phosphopantetheine, yielding dephospho-CoA (dPCoA) and pyrophosphate. The sequence is that of Phosphopantetheine adenylyltransferase from Pseudoalteromonas translucida (strain TAC 125).